The chain runs to 266 residues: Hydroxyacylglutathione hydrolase (266 aa).

Residues His-53, His-55, Asp-57, His-58, His-118, Asp-140, and His-178 each contribute to the Zn(2+) site.

The protein belongs to the metallo-beta-lactamase superfamily. Glyoxalase II family. In terms of assembly, monomer. It depends on Zn(2+) as a cofactor.

The enzyme catalyses an S-(2-hydroxyacyl)glutathione + H2O = a 2-hydroxy carboxylate + glutathione + H(+). It participates in secondary metabolite metabolism; methylglyoxal degradation; (R)-lactate from methylglyoxal: step 2/2. Functionally, thiolesterase that catalyzes the hydrolysis of S-D-lactoyl-glutathione to form glutathione and D-lactic acid. The chain is Hydroxyacylglutathione hydrolase from Cupriavidus taiwanensis (strain DSM 17343 / BCRC 17206 / CCUG 44338 / CIP 107171 / LMG 19424 / R1) (Ralstonia taiwanensis (strain LMG 19424)).